A 323-amino-acid polypeptide reads, in one-letter code: Aldo-keto reductase family 1 member C13 (323 aa).

NAD(+) is bound by residues 20–24 (GFGTY), aspartate 50, and tyrosine 55. The active-site Proton donor is the tyrosine 55. Substrate is bound at residue histidine 117. NAD(+) contacts are provided by residues 166–167 (SN), glutamine 190, 216–224 (YGALGTQRY), and 270–280 (QSFKENEMREN).

It belongs to the aldo/keto reductase family.

Its function is as follows. Catalyzes the dehydrogenation of 17-beta-hydroxysteroids. May also exhibit significant activity with a variety of cyclic and alicyclic alcohols. Uses both NAD and NADP, but the activity is much greater with NAD than with NADP. This is Aldo-keto reductase family 1 member C13 (Akr1c13) from Mus musculus (Mouse).